The primary structure comprises 417 residues: Calreticulin (417 aa).

The N-terminal stretch at 1-17 is a signal peptide; that stretch reads MLLPVPLLLGLLGLAAA. The interval 18-197 is N-domain; that stretch reads DPTVYFKEQF…NSQVESGSLE (180 aa). Residue glutamine 26 coordinates Ca(2+). An N6-acetyllysine modification is found at lysine 48. The Ca(2+) site is built by lysine 62 and lysine 64. Lysine 64 bears the N6-(2-hydroxyisobutyryl)lysine mark. Residues tyrosine 109, lysine 111, tyrosine 128, and aspartate 135 each contribute to the an alpha-D-glucoside site. Cysteine 137 and cysteine 163 are disulfide-bonded. At lysine 159 the chain carries N6-acetyllysine. A glycan (N-linked (GlcNAc...) asparagine) is linked at asparagine 179. The 1-1 repeat unit spans residues 191–202; the sequence is VESGSLEDDWDF. The tract at residues 191–255 is 4 X approximate repeats; sequence VESGSLEDDW…DAKKPEDWDE (65 aa). The disordered stretch occupies residues 193-270; sequence SGSLEDDWDF…WEPPVIQNPE (78 aa). Positions 198–308 are P-domain; sequence DDWDFLPPKK…YSPDSNIYAY (111 aa). Positions 207–251 are enriched in basic and acidic residues; that stretch reads KIKDPDAAKPEDWDDRAKIDDPTDSKPEDWDKPEHIPDPDAKKPE. Lysine 209 bears the N6-acetyllysine mark. 6 consecutive repeat copies span residues 210-221, 227-238, 244-255, 259-269, 273-283, and 287-297. The interval 237–270 is interaction with PPIB; that stretch reads DKPEHIPDPDAKKPEDWDEEMDGEWEPPVIQNPE. Positions 252–261 are enriched in acidic residues; it reads DWDEEMDGEW. The interval 259 to 297 is 3 X approximate repeats; the sequence is GEWEPPVIQNPEYKGEWKPRQIDNPEYKGIWIHPEIDNP. Residues 309–417 form a C-domain region; it reads ENFAVLGLDL…AAAGQAKDEL (109 aa). An an alpha-D-glucoside-binding site is contributed by aspartate 317. Ca(2+) is bound at residue aspartate 328. A disordered region spans residues 350 to 417; the sequence is TKAAEKQMKD…AAAGQAKDEL (68 aa). Positions 352–378 are enriched in basic and acidic residues; sequence AAEKQMKDKQDEEQRLHEEEEEKKGKE. Residues 379–408 are compositionally biased toward acidic residues; it reads EEEADKDDDEDKDEDEEDEDEKEEEEEEDA. A Prevents secretion from ER motif is present at residues 414–417; the sequence is KDEL.

This sequence belongs to the calreticulin family. Monomer. Component of an EIF2 complex at least composed of CELF1/CUGBP1, CALR, CALR3, EIF2S1, EIF2S2, HSP90B1 and HSPA5. Interacts with PDIA3/ERp57 and SPACA9. Interacts with TRIM21. Interacts with NR3C1. Interacts with PPIB. Interacts (via P-domain) with PDIA5. Interacts with GABARAP. Interacts with CLCC1.

The protein resides in the endoplasmic reticulum lumen. Its subcellular location is the cytoplasm. The protein localises to the cytosol. It is found in the secreted. It localises to the extracellular space. The protein resides in the extracellular matrix. Its subcellular location is the cell surface. The protein localises to the sarcoplasmic reticulum lumen. It is found in the cytoplasmic vesicle. It localises to the secretory vesicle. The protein resides in the cortical granule. Its subcellular location is the cytolytic granule. Calcium-binding chaperone that promotes folding, oligomeric assembly and quality control in the endoplasmic reticulum (ER) via the calreticulin/calnexin cycle. This lectin interacts transiently with almost all of the monoglucosylated glycoproteins that are synthesized in the ER. Interacts with the DNA-binding domain of NR3C1 and mediates its nuclear export. Involved in maternal gene expression regulation. May participate in oocyte maturation via the regulation of calcium homeostasis. Present in the cortical granules of non-activated oocytes, is exocytosed during the cortical reaction in response to oocyte activation and might participate in the block to polyspermy. The chain is Calreticulin (CALR) from Bos taurus (Bovine).